Reading from the N-terminus, the 208-residue chain is Putative 3-methyladenine DNA glycosylase (208 aa).

The protein belongs to the DNA glycosylase MPG family.

This is Putative 3-methyladenine DNA glycosylase from Lactobacillus johnsonii (strain CNCM I-12250 / La1 / NCC 533).